The following is a 116-amino-acid chain: Protein V2 (116 aa).

Belongs to the geminiviridae protein AV2/V2 family. As to quaternary structure, interacts with host SGS3.

It localises to the host cytoplasm. It is found in the host perinuclear region. In terms of biological role, through its interaction with host SGS3, acts as a suppressor of RNA-mediated gene silencing, also known as post-transcriptional gene silencing (PTGS), a mechanism of plant viral defense that limits the accumulation of viral RNAs. The chain is Protein V2 from Tomato yellow leaf curl virus (strain Israel) (TYLCV).